The primary structure comprises 400 residues: Acetate kinase (400 aa).

Asn-9 lines the Mg(2+) pocket. ATP is bound at residue Lys-16. Residue Arg-90 participates in substrate binding. Asp-147 acts as the Proton donor/acceptor in catalysis. ATP contacts are provided by residues 207–211, 282–284, and 330–334; these read HIGNG, DLR, and GIGEN. Glu-385 serves as a coordination point for Mg(2+).

Belongs to the acetokinase family. In terms of assembly, homodimer. Mg(2+) serves as cofactor. Mn(2+) is required as a cofactor.

Its subcellular location is the cytoplasm. The enzyme catalyses acetate + ATP = acetyl phosphate + ADP. It participates in metabolic intermediate biosynthesis; acetyl-CoA biosynthesis; acetyl-CoA from acetate: step 1/2. Catalyzes the formation of acetyl phosphate from acetate and ATP. Can also catalyze the reverse reaction. The polypeptide is Acetate kinase (Staphylococcus aureus (strain Mu3 / ATCC 700698)).